A 149-amino-acid chain; its full sequence is Heavy metal-associated isoprenylated plant protein 21 (149 aa).

The 64-residue stretch at leucine 25 to glutamate 88 folds into the HMA domain. A metal cation contacts are provided by cysteine 36 and cysteine 39. Cysteine 146 carries the post-translational modification Cysteine methyl ester. A lipid anchor (S-farnesyl cysteine) is attached at cysteine 146. A propeptide spans serine 147–methionine 149 (removed in mature form).

This sequence belongs to the HIPP family. As to quaternary structure, interacts with ZHD11/HB29. Expressed at low levels in leaves and sepals.

The protein resides in the membrane. Its function is as follows. Heavy-metal-binding protein. Binds cadmium. May be involved in cadmium transport and play a role in cadmium detoxification. In Arabidopsis thaliana (Mouse-ear cress), this protein is Heavy metal-associated isoprenylated plant protein 21.